Consider the following 184-residue polypeptide: Phosphopantetheine adenylyltransferase (184 aa).

Serine 8 lines the substrate pocket. ATP-binding positions include 8–9 (SF) and histidine 16. Substrate-binding residues include lysine 40, leucine 74, and arginine 88. ATP is bound by residues 89–91 (GLR), glutamate 99, and 123–129 (WSFVSST).

The protein belongs to the bacterial CoaD family. Homohexamer. Mg(2+) serves as cofactor.

It is found in the cytoplasm. The enzyme catalyses (R)-4'-phosphopantetheine + ATP + H(+) = 3'-dephospho-CoA + diphosphate. The protein operates within cofactor biosynthesis; coenzyme A biosynthesis; CoA from (R)-pantothenate: step 4/5. Its function is as follows. Reversibly transfers an adenylyl group from ATP to 4'-phosphopantetheine, yielding dephospho-CoA (dPCoA) and pyrophosphate. This chain is Phosphopantetheine adenylyltransferase, found in Deinococcus geothermalis (strain DSM 11300 / CIP 105573 / AG-3a).